Consider the following 91-residue polypeptide: Small ribosomal subunit protein uS19 (91 aa).

The protein belongs to the universal ribosomal protein uS19 family.

In terms of biological role, protein S19 forms a complex with S13 that binds strongly to the 16S ribosomal RNA. In Pseudomonas fluorescens (strain SBW25), this protein is Small ribosomal subunit protein uS19.